The following is a 201-amino-acid chain: Protamine-like protein 99C (201 aa).

The tract at residues glycine 93–serine 143 is disordered. A compositionally biased stretch (polar residues) spans glycine 94–proline 104. The segment covering alanine 125–serine 143 has biased composition (basic residues).

Belongs to the UPF0771 family.

Its subcellular location is the nucleus. It is found in the chromosome. Its function is as follows. Regulates chromatin compaction in spermatid nuclei and is essential for male fertility. Functions in parallel with other chromatin-condensing proteins such as ProtA, ProtB and Mst77F. This is Protamine-like protein 99C from Drosophila melanogaster (Fruit fly).